A 137-amino-acid polypeptide reads, in one-letter code: MPRRHQPEKHPGGSHRQLRVAETVRHAIADILAQGQVHDPVLEGHLVTVPEVRMSADLKLATIYVMPLGGRDTADVIDALDRNRKFLRGEIARRVNLKFAPDIRFRVDERFDEAERIEKLLRTPAVQRDLAPDTDES.

The protein belongs to the RbfA family. In terms of assembly, monomer. Binds 30S ribosomal subunits, but not 50S ribosomal subunits or 70S ribosomes.

The protein localises to the cytoplasm. One of several proteins that assist in the late maturation steps of the functional core of the 30S ribosomal subunit. Associates with free 30S ribosomal subunits (but not with 30S subunits that are part of 70S ribosomes or polysomes). Required for efficient processing of 16S rRNA. May interact with the 5'-terminal helix region of 16S rRNA. The sequence is that of Ribosome-binding factor A from Nitrobacter winogradskyi (strain ATCC 25391 / DSM 10237 / CIP 104748 / NCIMB 11846 / Nb-255).